The sequence spans 137 residues: Flavodoxin (137 aa).

The 136-residue stretch at Val-2–Ala-137 folds into the Flavodoxin-like domain.

It belongs to the flavodoxin family. FMN is required as a cofactor.

Functionally, low-potential electron donor to a number of redox enzymes. This chain is Flavodoxin, found in Megasphaera elsdenii.